The primary structure comprises 362 residues: 3-dehydroquinate synthase (362 aa).

NAD(+) contacts are provided by residues 71–76, 105–109, 129–130, Lys-142, Lys-151, and 169–172; these read DGEQYK, GVVGD, TT, and CLKT. Residues Glu-184, His-247, and His-264 each contribute to the Zn(2+) site.

This sequence belongs to the sugar phosphate cyclases superfamily. Dehydroquinate synthase family. Requires Co(2+) as cofactor. The cofactor is Zn(2+). NAD(+) is required as a cofactor.

The protein resides in the cytoplasm. It catalyses the reaction 7-phospho-2-dehydro-3-deoxy-D-arabino-heptonate = 3-dehydroquinate + phosphate. It participates in metabolic intermediate biosynthesis; chorismate biosynthesis; chorismate from D-erythrose 4-phosphate and phosphoenolpyruvate: step 2/7. Its function is as follows. Catalyzes the conversion of 3-deoxy-D-arabino-heptulosonate 7-phosphate (DAHP) to dehydroquinate (DHQ). The chain is 3-dehydroquinate synthase from Shigella boydii serotype 18 (strain CDC 3083-94 / BS512).